A 464-amino-acid chain; its full sequence is Glucan 1,3-beta-glucosidase 3 (464 aa).

The protein belongs to the glycosyl hydrolase 5 (cellulase A) family.

It carries out the reaction Successive hydrolysis of beta-D-glucose units from the non-reducing ends of (1-&gt;3)-beta-D-glucans, releasing alpha-glucose.. This Schizosaccharomyces pombe (strain 972 / ATCC 24843) (Fission yeast) protein is Glucan 1,3-beta-glucosidase 3 (exg3).